A 77-amino-acid chain; its full sequence is Large ribosomal subunit protein bL28 (77 aa).

The tract at residues methionine 1 to alanine 21 is disordered.

This sequence belongs to the bacterial ribosomal protein bL28 family.

The protein is Large ribosomal subunit protein bL28 of Chromobacterium violaceum (strain ATCC 12472 / DSM 30191 / JCM 1249 / CCUG 213 / NBRC 12614 / NCIMB 9131 / NCTC 9757 / MK).